A 143-amino-acid polypeptide reads, in one-letter code: Holo-[acyl-carrier-protein] synthase (143 aa).

Residues Asp9 and Glu63 each coordinate Mg(2+).

Belongs to the P-Pant transferase superfamily. AcpS family. The cofactor is Mg(2+).

Its subcellular location is the cytoplasm. The enzyme catalyses apo-[ACP] + CoA = holo-[ACP] + adenosine 3',5'-bisphosphate + H(+). In terms of biological role, transfers the 4'-phosphopantetheine moiety from coenzyme A to a Ser of acyl-carrier-protein. This chain is Holo-[acyl-carrier-protein] synthase, found in Burkholderia pseudomallei (strain 1106a).